We begin with the raw amino-acid sequence, 516 residues long: Importin subunit alpha-B (516 aa).

The segment covering 1 to 29 has biased composition (basic and acidic residues); that stretch reads MQRSKQETRKSQYKKSIDSDESRRKREEA. Positions 1–54 are disordered; that stretch reads MQRSKQETRKSQYKKSIDSDESRRKREEASLSIRKNKREESLLKKRTQAVPGST. An IBB domain is found at 1–55; that stretch reads MQRSKQETRKSQYKKSIDSDESRRKREEASLSIRKNKREESLLKKRTQAVPGSTP. 9 ARM repeats span residues 55-96, 100-140, 143-182, 185-227, 229-268, 271-310, 313-352, 355-394, and 398-437; these read PVKV…KLLS, SPPI…NIAS, PEQT…NIAG, HYCR…NFCR, KPQP…YLSD, NERI…NIVT, DNQT…NITA, KNQI…NATS, and PQQI…NILV. The segment at 490–516 is disordered; it reads EQEDEGDLMPEGSSFSFSNQTNSNFNL. Low complexity predominate over residues 502-516; that stretch reads SSFSFSNQTNSNFNL.

The protein belongs to the importin alpha family. Forms a complex with tnpo/importin subunit beta.

Its subcellular location is the cytoplasm. It localises to the nucleus envelope. Functions in nuclear protein import via a substrate-importin alpha-beta transport complex that passes though the nuclear pore complexes (NPC). Binds specifically and directly to substrates containing either a simple or bipartite NLS motif. This Dictyostelium discoideum (Social amoeba) protein is Importin subunit alpha-B.